An 85-amino-acid polypeptide reads, in one-letter code: Antitoxin VapB43 (85 aa).

The tract at residues 37–60 (GLNPPKPQAAGRYRVQPSGKGGLR) is disordered.

Antitoxin component of a type II toxin-antitoxin (TA) system. This Mycobacterium tuberculosis (strain CDC 1551 / Oshkosh) protein is Antitoxin VapB43 (vapB43).